The sequence spans 148 residues: Snaclec B1 (148 aa).

A signal peptide spans 1-24 (MGRIIFVSFGLLVVFLSLSGTGAA). 3 disulfides stabilise this stretch: cysteine 27-cysteine 38, cysteine 55-cysteine 144, and cysteine 121-cysteine 136. In terms of domain architecture, C-type lectin spans 34 to 145 (YDQHCYKVFD…CRLLGHFVCK (112 aa)).

This sequence belongs to the snaclec family. In terms of assembly, heterodimer; disulfide-linked. As to expression, expressed by the venom gland.

Its subcellular location is the secreted. In terms of biological role, interferes with one step of hemostasis (modulation of platelet aggregation, or coagulation cascade, for example). This chain is Snaclec B1, found in Macrovipera lebetinus (Levantine viper).